The sequence spans 221 residues: Ependymin-2 (221 aa).

The N-terminal stretch at 1–21 (MQDFAFAALSIWLCLGATALA) is a signal peptide. N-linked (GlcNAc...) asparagine glycans are attached at residues Asn33, Asn73, and Asn97.

Belongs to the ependymin family. Binds calcium through the terminal sialic acids. EPDs are synthesized in the meninx and secreted in the cerebrospinal fluid.

It localises to the secreted. In terms of biological role, may play a role in neural plasticity. May be involved during axon regeneration. The chain is Ependymin-2 (epd2) from Salmo salar (Atlantic salmon).